Consider the following 545-residue polypeptide: CTP synthase (545 aa).

The interval 1-266 (MTTNYIFVTG…DDYICKRFSL (266 aa)) is amidoligase domain. CTP is bound at residue Ser14. Ser14 is a binding site for UTP. ATP is bound by residues 15-20 (SLGKGI) and Asp72. Mg(2+) is bound by residues Asp72 and Glu140. Residues 147 to 149 (DIE), 187 to 192 (KTKPTQ), and Lys223 contribute to the CTP site. Residues 187-192 (KTKPTQ) and Lys223 each bind UTP. ATP is bound at residue 239 to 241 (KDV). The Glutamine amidotransferase type-1 domain maps to 291–542 (TIGMVGKYIE…VKAASEHQKR (252 aa)). Gly352 lines the L-glutamine pocket. Cys379 functions as the Nucleophile; for glutamine hydrolysis in the catalytic mechanism. L-glutamine-binding positions include 380-383 (LGMQ), Glu403, and Arg470. Active-site residues include His515 and Glu517.

Belongs to the CTP synthase family. In terms of assembly, homotetramer.

The enzyme catalyses UTP + L-glutamine + ATP + H2O = CTP + L-glutamate + ADP + phosphate + 2 H(+). The catalysed reaction is L-glutamine + H2O = L-glutamate + NH4(+). It catalyses the reaction UTP + NH4(+) + ATP = CTP + ADP + phosphate + 2 H(+). It functions in the pathway pyrimidine metabolism; CTP biosynthesis via de novo pathway; CTP from UDP: step 2/2. With respect to regulation, allosterically activated by GTP, when glutamine is the substrate; GTP has no effect on the reaction when ammonia is the substrate. The allosteric effector GTP functions by stabilizing the protein conformation that binds the tetrahedral intermediate(s) formed during glutamine hydrolysis. Inhibited by the product CTP, via allosteric rather than competitive inhibition. Catalyzes the ATP-dependent amination of UTP to CTP with either L-glutamine or ammonia as the source of nitrogen. Regulates intracellular CTP levels through interactions with the four ribonucleotide triphosphates. This is CTP synthase from Salmonella arizonae (strain ATCC BAA-731 / CDC346-86 / RSK2980).